We begin with the raw amino-acid sequence, 658 residues long: Probable methyl-accepting chemotaxis protein BT9727_0469 (658 aa).

The Cytoplasmic portion of the chain corresponds to 1 to 14; sequence MLQGKLRRSSLKAK. A helical transmembrane segment spans residues 15 to 35; that stretch reads LLVSFVIVLILPSIVIGWTSY. Over 36–283 the chain is Extracellular; it reads QQAKTNFNET…ANPIFYKTLT (248 aa). Positions 44-109 form a coiled coil; it reads ETILQSAEDN…NKLHPEIEAI (66 aa). The 72-residue stretch at 150–221 folds into the Cache domain; that stretch reads ITAPYKSSTT…AHPTMKPGDK (72 aa). The chain crosses the membrane as a helical span at residues 284-304; the sequence is VIGISLIIGGVLIYFIIASII. The HAMP domain maps to 301–353; sequence ASIISPLKQLVISSKKISEGDLTETITVHSKDEIGQLGESFNEMAASLHHVIS. Topologically, residues 305–658 are cytoplasmic; that stretch reads SPLKQLVISS…LQEMIGKFKV (354 aa). A Glutamate methyl ester (Glu) modification is found at Glu368. One can recognise a Methyl-accepting transducer domain in the interval 372–622; that stretch reads SMKQTSEATE…ENAASVQNIA (251 aa). Gln592 bears the Deamidated glutamine mark. The residue at position 592 (Gln592) is a Glutamate methyl ester (Gln). 2 positions are modified to glutamate methyl ester (Glu): Glu627 and Glu634.

This sequence belongs to the methyl-accepting chemotaxis (MCP) protein family.

It localises to the cell membrane. Its function is as follows. Chemotactic-signal transducers respond to changes in the concentration of attractants and repellents in the environment, transduce a signal from the outside to the inside of the cell, and facilitate sensory adaptation through the variation of the level of methylation. This is Probable methyl-accepting chemotaxis protein BT9727_0469 from Bacillus thuringiensis subsp. konkukian (strain 97-27).